A 130-amino-acid polypeptide reads, in one-letter code: Small ribosomal subunit protein uS8 (130 aa).

It belongs to the universal ribosomal protein uS8 family. Part of the 30S ribosomal subunit. Contacts proteins S5 and S12.

In terms of biological role, one of the primary rRNA binding proteins, it binds directly to 16S rRNA central domain where it helps coordinate assembly of the platform of the 30S subunit. This chain is Small ribosomal subunit protein uS8, found in Aliivibrio salmonicida (strain LFI1238) (Vibrio salmonicida (strain LFI1238)).